The chain runs to 463 residues: Glutamate--tRNA ligase 2 (463 aa).

The 'HIGH' region signature appears at 11-21 (PSPTGYLHIGG). The 'KMSKS' region motif lies at 240-244 (KLSKR). K243 serves as a coordination point for ATP.

Belongs to the class-I aminoacyl-tRNA synthetase family. Glutamate--tRNA ligase type 1 subfamily. In terms of assembly, monomer.

The protein localises to the cytoplasm. It carries out the reaction tRNA(Glu) + L-glutamate + ATP = L-glutamyl-tRNA(Glu) + AMP + diphosphate. In terms of biological role, catalyzes the attachment of glutamate to tRNA(Glu) in a two-step reaction: glutamate is first activated by ATP to form Glu-AMP and then transferred to the acceptor end of tRNA(Glu). This chain is Glutamate--tRNA ligase 2, found in Campylobacter jejuni (strain RM1221).